The sequence spans 271 residues: Phosphate import ATP-binding protein PstB (271 aa).

Residues Met-24 to Ile-266 enclose the ABC transporter domain. Gly-56–Ser-63 contacts ATP.

Belongs to the ABC transporter superfamily. Phosphate importer (TC 3.A.1.7) family. As to quaternary structure, the complex is composed of two ATP-binding proteins (PstB), two transmembrane proteins (PstC and PstA) and a solute-binding protein (PstS).

Its subcellular location is the cell inner membrane. The enzyme catalyses phosphate(out) + ATP + H2O = ADP + 2 phosphate(in) + H(+). Functionally, part of the ABC transporter complex PstSACB involved in phosphate import. Responsible for energy coupling to the transport system. The sequence is that of Phosphate import ATP-binding protein PstB from Rhizobium meliloti (strain 1021) (Ensifer meliloti).